Here is a 173-residue protein sequence, read N- to C-terminus: Crossover junction endodeoxyribonuclease RuvC (173 aa).

Residues Asp-8, Glu-67, and Asp-139 contribute to the active site. The Mg(2+) site is built by Asp-8, Glu-67, and Asp-139.

Belongs to the RuvC family. Homodimer which binds Holliday junction (HJ) DNA. The HJ becomes 2-fold symmetrical on binding to RuvC with unstacked arms; it has a different conformation from HJ DNA in complex with RuvA. In the full resolvosome a probable DNA-RuvA(4)-RuvB(12)-RuvC(2) complex forms which resolves the HJ. Mg(2+) serves as cofactor.

It localises to the cytoplasm. It carries out the reaction Endonucleolytic cleavage at a junction such as a reciprocal single-stranded crossover between two homologous DNA duplexes (Holliday junction).. The RuvA-RuvB-RuvC complex processes Holliday junction (HJ) DNA during genetic recombination and DNA repair. Endonuclease that resolves HJ intermediates. Cleaves cruciform DNA by making single-stranded nicks across the HJ at symmetrical positions within the homologous arms, yielding a 5'-phosphate and a 3'-hydroxyl group; requires a central core of homology in the junction. The consensus cleavage sequence is 5'-(A/T)TT(C/G)-3'. Cleavage occurs on the 3'-side of the TT dinucleotide at the point of strand exchange. HJ branch migration catalyzed by RuvA-RuvB allows RuvC to scan DNA until it finds its consensus sequence, where it cleaves and resolves the cruciform DNA. In Photobacterium profundum (strain SS9), this protein is Crossover junction endodeoxyribonuclease RuvC.